The primary structure comprises 61 residues: Photosystem II reaction center protein K (61 aa).

A propeptide spanning residues 1–24 is cleaved from the precursor; it reads MLNIFSLMYICLNSALYSSSFLFA. A helical transmembrane segment spans residues 40–60; it reads MPVIPVLFFLLAFVWQAAVSF.

Belongs to the PsbK family. PSII is composed of 1 copy each of membrane proteins PsbA, PsbB, PsbC, PsbD, PsbE, PsbF, PsbH, PsbI, PsbJ, PsbK, PsbL, PsbM, PsbT, PsbX, PsbY, PsbZ, Psb30/Ycf12, at least 3 peripheral proteins of the oxygen-evolving complex and a large number of cofactors. It forms dimeric complexes.

The protein localises to the plastid. It localises to the chloroplast thylakoid membrane. Its function is as follows. One of the components of the core complex of photosystem II (PSII). PSII is a light-driven water:plastoquinone oxidoreductase that uses light energy to abstract electrons from H(2)O, generating O(2) and a proton gradient subsequently used for ATP formation. It consists of a core antenna complex that captures photons, and an electron transfer chain that converts photonic excitation into a charge separation. This chain is Photosystem II reaction center protein K, found in Citrus sinensis (Sweet orange).